The primary structure comprises 143 residues: MLAWNNLVEMLGCSKASNEFIYLPQKLNELPVFEEGVLGDRSYYSFFNSGVLFLLEDDLVNQISLYIQADEGFSAYTGELPLPVNSRESEIIQVLGTPSGSGGGKMDMLLGYVNRWIKYKTESHTLHIQFDQNDQLCRVTLMQ.

In terms of assembly, interacts with cognate CdiA-CT but not non-cognate CdiA-CT from E.coli strain 536 / UPEC.

Immunity protein component of a toxin-immunity protein module, which functions as a cellular contact-dependent growth inhibition (CDI) system. CDI modules allow bacteria to communicate with and inhibit the growth of closely related neighboring bacteria in a contact-dependent fashion. Protects cells against the DNase activity of CdiA, its cognate toxin protein, but not against non-cognate CdiA from E.coli strain 536 / UPEC. This is Immunity protein CdiI (cdiI) from Dickeya dadantii (strain 3937) (Erwinia chrysanthemi (strain 3937)).